A 125-amino-acid polypeptide reads, in one-letter code: Fluoride-specific ion channel FluC (125 aa).

The next 4 membrane-spanning stretches (helical) occupy residues 4-24, 36-56, 68-88, and 100-120; these read PLLAVMIGGCAGCVIRWLLAV, GTLLVNLVGGLIIGATVAWFA, LITTGLCGGMTTFSTFSLEVV, and VISVLTHVTGSLLMTIAGFWL. Residues Gly75 and Thr78 each contribute to the Na(+) site.

It belongs to the fluoride channel Fluc/FEX (TC 1.A.43) family.

The protein localises to the cell inner membrane. It carries out the reaction fluoride(in) = fluoride(out). Its activity is regulated as follows. Na(+) is not transported, but it plays an essential structural role and its presence is essential for fluoride channel function. Its function is as follows. Fluoride-specific ion channel. Important for reducing fluoride concentration in the cell, thus reducing its toxicity. The sequence is that of Fluoride-specific ion channel FluC from Erwinia tasmaniensis (strain DSM 17950 / CFBP 7177 / CIP 109463 / NCPPB 4357 / Et1/99).